The following is a 143-amino-acid chain: Large ribosomal subunit protein uL13 (143 aa).

This sequence belongs to the universal ribosomal protein uL13 family. As to quaternary structure, part of the 50S ribosomal subunit.

Its function is as follows. This protein is one of the early assembly proteins of the 50S ribosomal subunit, although it is not seen to bind rRNA by itself. It is important during the early stages of 50S assembly. This is Large ribosomal subunit protein uL13 from Coprothermobacter proteolyticus (strain ATCC 35245 / DSM 5265 / OCM 4 / BT).